The following is a 273-amino-acid chain: Ribosomal RNA small subunit methyltransferase A (273 aa).

The S-adenosyl-L-methionine site is built by asparagine 18, leucine 20, glycine 45, glutamate 66, aspartate 91, and asparagine 113.

This sequence belongs to the class I-like SAM-binding methyltransferase superfamily. rRNA adenine N(6)-methyltransferase family. RsmA subfamily.

The protein resides in the cytoplasm. It carries out the reaction adenosine(1518)/adenosine(1519) in 16S rRNA + 4 S-adenosyl-L-methionine = N(6)-dimethyladenosine(1518)/N(6)-dimethyladenosine(1519) in 16S rRNA + 4 S-adenosyl-L-homocysteine + 4 H(+). Specifically dimethylates two adjacent adenosines (A1518 and A1519) in the loop of a conserved hairpin near the 3'-end of 16S rRNA in the 30S particle. May play a critical role in biogenesis of 30S subunits. The protein is Ribosomal RNA small subunit methyltransferase A of Salmonella newport (strain SL254).